A 307-amino-acid polypeptide reads, in one-letter code: S-methyl-5'-thioadenosine phosphorylase (307 aa).

Residues threonine 20, arginine 62 to histidine 63, and serine 95 to alanine 96 contribute to the phosphate site. A substrate-binding site is contributed by methionine 197. Phosphate is bound at residue serine 198. A substrate-binding site is contributed by aspartate 221–aspartate 223.

Belongs to the PNP/MTAP phosphorylase family. MTAP subfamily. As to quaternary structure, homotrimer.

It localises to the cytoplasm. It is found in the nucleus. It catalyses the reaction S-methyl-5'-thioadenosine + phosphate = 5-(methylsulfanyl)-alpha-D-ribose 1-phosphate + adenine. Its pathway is amino-acid biosynthesis; L-methionine biosynthesis via salvage pathway; S-methyl-5-thio-alpha-D-ribose 1-phosphate from S-methyl-5'-thioadenosine (phosphorylase route): step 1/1. Catalyzes the reversible phosphorylation of S-methyl-5'-thioadenosine (MTA) to adenine and 5-methylthioribose-1-phosphate. Involved in the breakdown of MTA, a major by-product of polyamine biosynthesis. Responsible for the first step in the methionine salvage pathway after MTA has been generated from S-adenosylmethionine. Has broad substrate specificity with 6-aminopurine nucleosides as preferred substrates. The sequence is that of S-methyl-5'-thioadenosine phosphorylase from Fusarium vanettenii (strain ATCC MYA-4622 / CBS 123669 / FGSC 9596 / NRRL 45880 / 77-13-4) (Fusarium solani subsp. pisi).